Consider the following 925-residue polypeptide: Probable dipeptidyl-aminopeptidase B (925 aa).

The interval 1–104 (MTPYRDVPPV…RHAQKKGPGM (104 aa)) is disordered. Over 1–110 (MTPYRDVPPV…GPGMDRGMRR (110 aa)) the chain is Cytoplasmic. The segment covering 31 to 40 (ESGSSVSTTS) has biased composition (low complexity). Residues 55 to 72 (LSEKQPRGDDNEDALKDE) show a composition bias toward basic and acidic residues. Residues 111-131 (ALLIAAGLLVSAWVAGLFVYI) traverse the membrane as a helical; Signal-anchor for type II membrane protein segment. The Vacuolar segment spans residues 132–925 (ATKSYKPASA…PKPNGKRRAA (794 aa)). Asn-369 carries an N-linked (GlcNAc...) asparagine glycan. Ser-773 (charge relay system) is an active-site residue. Asn-832 carries N-linked (GlcNAc...) asparagine glycosylation. Active-site charge relay system residues include Asp-850 and His-883.

This sequence belongs to the peptidase S9B family.

The protein resides in the vacuole membrane. The enzyme catalyses Release of an N-terminal dipeptide, Xaa-Yaa-|-Zaa-, from a polypeptide, preferentially when Yaa is Pro, provided Zaa is neither Pro nor hydroxyproline.. Its function is as follows. Type IV dipeptidyl-peptidase which removes N-terminal dipeptides sequentially from polypeptides having unsubstituted N-termini provided that the penultimate residue is proline. This chain is Probable dipeptidyl-aminopeptidase B (DAPB), found in Chaetomium globosum (strain ATCC 6205 / CBS 148.51 / DSM 1962 / NBRC 6347 / NRRL 1970) (Soil fungus).